The sequence spans 480 residues: Protein nucleotidyltransferase YdiU (480 aa).

ATP is bound by residues glycine 86, glycine 88, arginine 89, lysine 109, aspartate 121, glycine 122, arginine 172, and arginine 179. Aspartate 248 functions as the Proton acceptor in the catalytic mechanism. Mg(2+) is bound by residues asparagine 249 and aspartate 258. Position 258 (aspartate 258) interacts with ATP.

Belongs to the SELO family. Mg(2+) is required as a cofactor. Mn(2+) serves as cofactor.

The enzyme catalyses L-seryl-[protein] + ATP = 3-O-(5'-adenylyl)-L-seryl-[protein] + diphosphate. The catalysed reaction is L-threonyl-[protein] + ATP = 3-O-(5'-adenylyl)-L-threonyl-[protein] + diphosphate. It carries out the reaction L-tyrosyl-[protein] + ATP = O-(5'-adenylyl)-L-tyrosyl-[protein] + diphosphate. It catalyses the reaction L-histidyl-[protein] + UTP = N(tele)-(5'-uridylyl)-L-histidyl-[protein] + diphosphate. The enzyme catalyses L-seryl-[protein] + UTP = O-(5'-uridylyl)-L-seryl-[protein] + diphosphate. The catalysed reaction is L-tyrosyl-[protein] + UTP = O-(5'-uridylyl)-L-tyrosyl-[protein] + diphosphate. Its function is as follows. Nucleotidyltransferase involved in the post-translational modification of proteins. It can catalyze the addition of adenosine monophosphate (AMP) or uridine monophosphate (UMP) to a protein, resulting in modifications known as AMPylation and UMPylation. This chain is Protein nucleotidyltransferase YdiU, found in Klebsiella pneumoniae subsp. pneumoniae (strain ATCC 700721 / MGH 78578).